The primary structure comprises 117 residues: Large ribosomal subunit protein bL17 (117 aa).

This sequence belongs to the bacterial ribosomal protein bL17 family. In terms of assembly, part of the 50S ribosomal subunit. Contacts protein L32.

In Neorickettsia sennetsu (strain ATCC VR-367 / Miyayama) (Ehrlichia sennetsu), this protein is Large ribosomal subunit protein bL17.